The chain runs to 421 residues: ATP-dependent RNA helicase RhlB (421 aa).

A Q motif motif is present at residues 9–37 (THFADLPINEQVVKALSAANFSHCTPIQA). The region spanning 40–216 (LPPLLEGNDI…YEHMDNPTHV (177 aa)) is the Helicase ATP-binding domain. Residue 53–60 (AQTGTGKT) coordinates ATP. The DEAD box signature appears at 162 to 165 (DEAD). A Helicase C-terminal domain is found at 240 to 387 (KMALLLSLME…VTEYQADALL (148 aa)). The segment at 389–421 (DVTPPKPRHKKRMQNGRNPQKRQSSGSRNRRKP) is disordered. Positions 403–415 (NGRNPQKRQSSGS) are enriched in polar residues.

It belongs to the DEAD box helicase family. RhlB subfamily. In terms of assembly, component of the RNA degradosome, which is a multiprotein complex involved in RNA processing and mRNA degradation.

The protein localises to the cytoplasm. It carries out the reaction ATP + H2O = ADP + phosphate + H(+). Functionally, DEAD-box RNA helicase involved in RNA degradation. Has RNA-dependent ATPase activity and unwinds double-stranded RNA. This chain is ATP-dependent RNA helicase RhlB, found in Pseudoalteromonas atlantica (strain T6c / ATCC BAA-1087).